The chain runs to 258 residues: Imidazole glycerol phosphate synthase subunit HisF (258 aa).

Residues Asp-11 and Asp-130 contribute to the active site.

The protein belongs to the HisA/HisF family. In terms of assembly, heterodimer of HisH and HisF.

The protein localises to the cytoplasm. The enzyme catalyses 5-[(5-phospho-1-deoxy-D-ribulos-1-ylimino)methylamino]-1-(5-phospho-beta-D-ribosyl)imidazole-4-carboxamide + L-glutamine = D-erythro-1-(imidazol-4-yl)glycerol 3-phosphate + 5-amino-1-(5-phospho-beta-D-ribosyl)imidazole-4-carboxamide + L-glutamate + H(+). It participates in amino-acid biosynthesis; L-histidine biosynthesis; L-histidine from 5-phospho-alpha-D-ribose 1-diphosphate: step 5/9. Its function is as follows. IGPS catalyzes the conversion of PRFAR and glutamine to IGP, AICAR and glutamate. The HisF subunit catalyzes the cyclization activity that produces IGP and AICAR from PRFAR using the ammonia provided by the HisH subunit. This chain is Imidazole glycerol phosphate synthase subunit HisF, found in Synechococcus sp. (strain CC9902).